Here is a 664-residue protein sequence, read N- to C-terminus: Pentatricopeptide repeat-containing protein At1g10910, chloroplastic (664 aa).

The transit peptide at 1–72 (METPLLVGLE…KRHSNSYLAR (72 aa)) directs the protein to the chloroplast. PPR repeat units lie at residues 165–199 (NVYI…GLKP), 200–235 (DVVT…GIQM), 236–270 (DSVM…GHSP), 271–305 (NIYH…GLVP), 306–340 (NKVM…GYAE), 341–375 (NEMP…GVRS), 376–406 (DGYA…SETT), 411–445 (DLVM…AVSP), and 446–480 (DYNT…GHRL).

The protein belongs to the PPR family. P subfamily.

The protein resides in the plastid. It localises to the chloroplast. The polypeptide is Pentatricopeptide repeat-containing protein At1g10910, chloroplastic (Arabidopsis thaliana (Mouse-ear cress)).